We begin with the raw amino-acid sequence, 195 residues long: Glycerol-3-phosphate acyltransferase (195 aa).

4 helical membrane-spanning segments follow: residues Ile2–Val22, Ala79–Phe99, Val111–Leu131, and Thr146–Leu166.

This sequence belongs to the PlsY family. As to quaternary structure, probably interacts with PlsX.

The protein resides in the cell membrane. The catalysed reaction is an acyl phosphate + sn-glycerol 3-phosphate = a 1-acyl-sn-glycero-3-phosphate + phosphate. Its pathway is lipid metabolism; phospholipid metabolism. Functionally, catalyzes the transfer of an acyl group from acyl-phosphate (acyl-PO(4)) to glycerol-3-phosphate (G3P) to form lysophosphatidic acid (LPA). This enzyme utilizes acyl-phosphate as fatty acyl donor, but not acyl-CoA or acyl-ACP. This Alkaliphilus metalliredigens (strain QYMF) protein is Glycerol-3-phosphate acyltransferase.